Here is a 475-residue protein sequence, read N- to C-terminus: Methionine aminopeptidase 2-1 (475 aa).

Residues 1–12 (MGSKSPEGHRQT) show a composition bias toward basic and acidic residues. Residues 1–97 (MGSKSPEGHR…LKQSSPPRVL (97 aa)) form a disordered region. Residues 44–57 (NLDDDNDDDGEANE) are compositionally biased toward acidic residues. Positions 70–83 (KKKKRKRSKKKTKK) are enriched in basic residues. Residue histidine 211 participates in substrate binding. A divalent metal cation-binding residues include aspartate 232, aspartate 243, and histidine 312. Histidine 320 is a substrate binding site. Glutamate 345 and glutamate 456 together coordinate a divalent metal cation.

Belongs to the peptidase M24A family. Methionine aminopeptidase eukaryotic type 2 subfamily. It depends on Co(2+) as a cofactor. Requires Zn(2+) as cofactor. Mn(2+) serves as cofactor. The cofactor is Fe(2+).

Its subcellular location is the cytoplasm. The enzyme catalyses Release of N-terminal amino acids, preferentially methionine, from peptides and arylamides.. Functionally, cotranslationally removes the N-terminal methionine from nascent proteins. The N-terminal methionine is often cleaved when the second residue in the primary sequence is small and uncharged (Met-Ala-, Cys, Gly, Pro, Ser, Thr, or Val). The chain is Methionine aminopeptidase 2-1 from Aspergillus niger (strain ATCC MYA-4892 / CBS 513.88 / FGSC A1513).